The primary structure comprises 289 residues: Shikimate dehydrogenase (NADP(+)) (289 aa).

Residues 19–21 (SMS) and Thr66 each bind shikimate. Lys70 (proton acceptor) is an active-site residue. The shikimate site is built by Asn91 and Asp106. NADP(+)-binding positions include 131–135 (GAGGA), 155–160 (NRTLKK), and Leu229. Residue Tyr231 participates in shikimate binding. Residue Gly252 coordinates NADP(+).

The protein belongs to the shikimate dehydrogenase family. As to quaternary structure, homodimer.

The enzyme catalyses shikimate + NADP(+) = 3-dehydroshikimate + NADPH + H(+). It participates in metabolic intermediate biosynthesis; chorismate biosynthesis; chorismate from D-erythrose 4-phosphate and phosphoenolpyruvate: step 4/7. Involved in the biosynthesis of the chorismate, which leads to the biosynthesis of aromatic amino acids. Catalyzes the reversible NADPH linked reduction of 3-dehydroshikimate (DHSA) to yield shikimate (SA). This Halothermothrix orenii (strain H 168 / OCM 544 / DSM 9562) protein is Shikimate dehydrogenase (NADP(+)).